A 330-amino-acid chain; its full sequence is Inactive serine protease 45 (330 aa).

Positions 1-35 (MATSLRLLDAGPGSLRRWIPTCFAALLLLPPRPNL) are cleaved as a signal peptide. The 247-residue stretch at 45–291 (VCGAPWWSDS…YTGWIKEQVS (247 aa)) folds into the Peptidase S1 domain. Cystine bridges form between cysteine 75/cysteine 91, cysteine 172/cysteine 249, cysteine 207/cysteine 230, and cysteine 239/cysteine 267. The N-linked (GlcNAc...) asparagine glycan is linked to asparagine 272.

The protein belongs to the peptidase S1 family.

The protein localises to the secreted. This is Inactive serine protease 45 (Prss45) from Rattus norvegicus (Rat).